Here is a 125-residue protein sequence, read N- to C-terminus: Cytochrome c' (125 aa).

Heme c is bound by residues Arg10, Glu67, Cys116, Cys119, and His120.

Homodimer. Post-translationally, binds 1 heme c group covalently per subunit.

Its function is as follows. Cytochrome c' is the most widely occurring bacterial c-type cytochrome. Cytochromes c' are high-spin proteins and the heme has no sixth ligand. Their exact function is not known. The polypeptide is Cytochrome c' (Pararhodospirillum photometricum (Rhodospirillum photometricum)).